The following is an 878-amino-acid chain: Aconitase htyD (878 aa).

Substrate is bound by residues glutamine 173 and 290 to 292; that span reads DSH. Residues cysteine 472, cysteine 535, and cysteine 538 each coordinate [4Fe-4S] cluster. The substrate site is built by arginine 558 and arginine 563. The segment at 626-671 is disordered; sequence IAIANQRTKPAPTMPAYVEPYRSFQPPVPPSSDQPQSMKDHGKTSN. 742-743 serves as a coordination point for substrate; sequence SR.

This sequence belongs to the aconitase/IPM isomerase family.

Its pathway is antifungal biosynthesis. Functionally, aconitase; part of the gene cluster that mediates the de novo generation of L-homotyrosine from acetyl-CoA and 4-hydroxyphenyl-pyruvate. L-homotyrosine is a building block of echinocandin B, a fungal lipidated cyclic hexapeptide that acts as an antifungal agent. L-homotyrosine 4-hydroxyphenyl-pyruvate first undergoes an aldol-type condensation by htyA with the C-2 of acetyl-CoA followed by the release of CoA to form 2-(4-hydroxybenzyl)-malate. This is followed by isomerization of 2-(4-hydroxy-benzyl)-malate to 3-(4-hydroxybenzyl)-malate by htyD. Thereafter, 3-(4-hydroxybenzyl)-malate undergoes decarboxylation and oxidation to form 2-oxo-4-(4-hydroxybenzyl)butanoic acid, coupled to reduction of NAD(+) to NADH by htyC. The product then undergoes transamination catalyzed by htyB to form L-homotyrosine. The polypeptide is Aconitase htyD (Aspergillus rugulosus (Emericella rugulosa)).